Reading from the N-terminus, the 372-residue chain is 4-hydroxy-3-methylbut-2-en-1-yl diphosphate synthase (flavodoxin) (372 aa).

Positions 270, 273, 305, and 312 each coordinate [4Fe-4S] cluster.

The protein belongs to the IspG family. Requires [4Fe-4S] cluster as cofactor.

The catalysed reaction is (2E)-4-hydroxy-3-methylbut-2-enyl diphosphate + oxidized [flavodoxin] + H2O + 2 H(+) = 2-C-methyl-D-erythritol 2,4-cyclic diphosphate + reduced [flavodoxin]. The protein operates within isoprenoid biosynthesis; isopentenyl diphosphate biosynthesis via DXP pathway; isopentenyl diphosphate from 1-deoxy-D-xylulose 5-phosphate: step 5/6. Functionally, converts 2C-methyl-D-erythritol 2,4-cyclodiphosphate (ME-2,4cPP) into 1-hydroxy-2-methyl-2-(E)-butenyl 4-diphosphate. This Cronobacter sakazakii (strain ATCC BAA-894) (Enterobacter sakazakii) protein is 4-hydroxy-3-methylbut-2-en-1-yl diphosphate synthase (flavodoxin).